A 145-amino-acid polypeptide reads, in one-letter code: Large ribosomal subunit protein uL13 (145 aa).

It belongs to the universal ribosomal protein uL13 family. In terms of assembly, part of the 50S ribosomal subunit.

This protein is one of the early assembly proteins of the 50S ribosomal subunit, although it is not seen to bind rRNA by itself. It is important during the early stages of 50S assembly. This is Large ribosomal subunit protein uL13 from Bacillus cereus (strain G9842).